The following is a 307-amino-acid chain: Protease HtpX homolog (307 aa).

Helical transmembrane passes span 7-27 (AILLAGLTGLFMGVGYLIGGA) and 28-48 (SGATIALVVAAATNLFAYWNS). Zn(2+) is bound at residue histidine 130. Glutamate 131 is an active-site residue. Zn(2+) is bound at residue histidine 134. Transmembrane regions (helical) follow at residues 145–165 (ITATIAGAISMLAQFGMFFGG) and 171–191 (GPGIIGSLAMMILAPFGAMLV). Glutamate 200 provides a ligand contact to Zn(2+). The interval 277 to 307 (AGQSGGGLAPGGPPPDPSSPWNKGSRRGPWG) is disordered.

The protein belongs to the peptidase M48B family. Requires Zn(2+) as cofactor.

The protein localises to the cell inner membrane. The chain is Protease HtpX homolog from Nitrobacter winogradskyi (strain ATCC 25391 / DSM 10237 / CIP 104748 / NCIMB 11846 / Nb-255).